We begin with the raw amino-acid sequence, 297 residues long: Calponin-1 (297 aa).

Residues 28-131 (HQREQELREW…STLLALASMA (104 aa)) form the Calponin-homology (CH) domain. A Phosphoserine modification is found at serine 48. Calponin-like repeat units follow at residues 164 to 189 (IGLQMGTNKFASQQGMTAYGTRRHLY), 204 to 229 (ISLQMGTNKGASQAGMTAPGTKRQIF), and 243 to 268 (VSLQMGSNKGASQRGMTVYGLPRQVY). Threonine 170 is subject to Phosphothreonine; by ROCK2. Position 175 is a phosphoserine; by ROCK2 (serine 175). Residues threonine 180 and threonine 184 each carry the phosphothreonine; by ROCK2 modification. Threonine 259 carries the phosphothreonine; by ROCK2 modification.

Belongs to the calponin family. In terms of assembly, part of cGMP kinase signaling complex at least composed of ACTA2/alpha-actin, CNN1/calponin H1, PLN/phospholamban, PRKG1 and ITPR1. Smooth muscle, and tissues containing significant amounts of smooth muscle.

Functionally, thin filament-associated protein that is implicated in the regulation and modulation of smooth muscle contraction. It is capable of binding to actin, calmodulin and tropomyosin. The interaction of calponin with actin inhibits the actomyosin Mg-ATPase activity. In Rattus norvegicus (Rat), this protein is Calponin-1 (Cnn1).